A 210-amino-acid polypeptide reads, in one-letter code: MHPFFQELQQGSQKLGLSLSDEALTLLLKYQDALVLWNKAYNLTAIRDPKEMLVKHLLDSLSILKDLPAGRLLDVGTGGGMPGMIIALCQPERSCVLLDSNGKKIRFLKQFIADLKLKNVIAVQTRVENQDTIDELGQFDVITSRAFASLTDFVEAARPYLHEQSIIAAMKGLIPVEEMEELKQEFSCKVIELHVPRLDEQRHLLLLQRI.

Residues Gly-76, Met-81, 127–128 (VE), and Arg-145 contribute to the S-adenosyl-L-methionine site.

Belongs to the methyltransferase superfamily. RNA methyltransferase RsmG family.

Its subcellular location is the cytoplasm. It carries out the reaction guanosine(527) in 16S rRNA + S-adenosyl-L-methionine = N(7)-methylguanosine(527) in 16S rRNA + S-adenosyl-L-homocysteine. In terms of biological role, specifically methylates the N7 position of guanine in position 527 of 16S rRNA. This is Ribosomal RNA small subunit methyltransferase G from Acinetobacter baumannii (strain AB307-0294).